Consider the following 377-residue polypeptide: Chaperone protein DnaJ (377 aa).

The region spanning 5–70 is the J domain; it reads DYYEVLGVGR…NKKAAYDQFG (66 aa). A CR-type zinc finger spans residues 133–211; that stretch reads GLTKELRIPT…CHGDGRVEKT (79 aa). Residues C146, C149, C163, C166, C185, C188, C199, and C202 each contribute to the Zn(2+) site. CXXCXGXG motif repeat units lie at residues 146-153, 163-170, 185-192, and 199-206; these read CDVCDGSG, CGTCHGQG, CPTCHGRG, and CSKCHGDG.

Belongs to the DnaJ family. In terms of assembly, homodimer. It depends on Zn(2+) as a cofactor.

It localises to the cytoplasm. Functionally, participates actively in the response to hyperosmotic and heat shock by preventing the aggregation of stress-denatured proteins and by disaggregating proteins, also in an autonomous, DnaK-independent fashion. Unfolded proteins bind initially to DnaJ; upon interaction with the DnaJ-bound protein, DnaK hydrolyzes its bound ATP, resulting in the formation of a stable complex. GrpE releases ADP from DnaK; ATP binding to DnaK triggers the release of the substrate protein, thus completing the reaction cycle. Several rounds of ATP-dependent interactions between DnaJ, DnaK and GrpE are required for fully efficient folding. Also involved, together with DnaK and GrpE, in the DNA replication of plasmids through activation of initiation proteins. The sequence is that of Chaperone protein DnaJ from Shewanella sp. (strain ANA-3).